The sequence spans 225 residues: Interleukin-6 (225 aa).

An N-terminal signal peptide occupies residues 1–24; the sequence is MPSRLNVFWLCAAALAALLRCAPA. The N-linked (GlcNAc...) asparagine glycan is linked to N98.

Belongs to the IL-6 superfamily. As to quaternary structure, component of a hexamer of two molecules each of IL6, IL6R and IL6ST; first binds to IL6R to associate with the signaling subunit IL6ST. As to expression, expressed in white muscle, skin, spleen, anterior intestine and stomach. Not expressed in brain, gill, head kidney, posterior intestine and adipose tissue.

The protein localises to the secreted. Its function is as follows. Cytokine with a wide variety of biological functions in immunity, tissue regeneration, and metabolism. Binds to IL6R, then the complex associates to the signaling subunit IL6ST/gp130 to trigger the intracellular IL6-signaling pathway. The interaction with the membrane-bound IL6R and IL6ST stimulates 'classic signaling', whereas the binding of IL6 and soluble IL6R to IL6ST stimulates 'trans-signaling'. Alternatively, 'cluster signaling' occurs when membrane-bound IL6:IL6R complexes on transmitter cells activate IL6ST receptors on neighboring receiver cells. This Sparus aurata (Gilthead sea bream) protein is Interleukin-6 (il6).